The following is a 276-amino-acid chain: Undecaprenyl-diphosphatase (276 aa).

7 consecutive transmembrane segments (helical) span residues 12-34, 43-63, 85-105, 108-128, 185-205, 218-238, and 249-269; these read LGIV…IVVG, TATA…MWEF, FNLL…ADLI, WLFN…IMLW, TEFS…YSLF, IFAI…RALL, and FAWY…LHLI.

The protein belongs to the UppP family.

It localises to the cell inner membrane. The enzyme catalyses di-trans,octa-cis-undecaprenyl diphosphate + H2O = di-trans,octa-cis-undecaprenyl phosphate + phosphate + H(+). Functionally, catalyzes the dephosphorylation of undecaprenyl diphosphate (UPP). Confers resistance to bacitracin. In Ectopseudomonas mendocina (strain ymp) (Pseudomonas mendocina), this protein is Undecaprenyl-diphosphatase.